We begin with the raw amino-acid sequence, 339 residues long: tRNA dimethylallyltransferase (339 aa).

ATP is bound at residue 36-43 (GPTGSGKT). 38 to 43 (TGSGKT) contacts substrate. Positions 61–64 (DSMQ) are interaction with substrate tRNA.

The protein belongs to the IPP transferase family. Monomer. The cofactor is Mg(2+).

The catalysed reaction is adenosine(37) in tRNA + dimethylallyl diphosphate = N(6)-dimethylallyladenosine(37) in tRNA + diphosphate. Catalyzes the transfer of a dimethylallyl group onto the adenine at position 37 in tRNAs that read codons beginning with uridine, leading to the formation of N6-(dimethylallyl)adenosine (i(6)A). The sequence is that of tRNA dimethylallyltransferase from Chlamydia trachomatis serovar L2 (strain ATCC VR-902B / DSM 19102 / 434/Bu).